The sequence spans 836 residues: Eukaryotic translation initiation factor 3 subunit C (836 aa).

A disordered region spans residues 1 to 97; sequence MSRFFVSGYD…RRVVKSAKEK (97 aa). The span at 13–55 shows a compositional bias: acidic residues; sequence SSSEEEDLLTSSEEELMSSEQESDSEFDDEFANDDDSDSSDSD. A compositionally biased stretch (basic and acidic residues) spans 86 to 97; sequence EGRRVVKSAKEK. Residues 586-761 form the PCI domain; it reads FHMHINLELL…KSINFVSSEH (176 aa). The tract at residues 783–817 is disordered; that stretch reads DKNEKTASNGHGRKTTQQQQQQQQKEQREQTHDEN. The span at 797–806 shows a compositional bias: low complexity; sequence TTQQQQQQQQ. Residues 807–817 are compositionally biased toward basic and acidic residues; it reads KEQREQTHDEN.

It belongs to the eIF-3 subunit C family. Component of the eukaryotic translation initiation factor 3 (eIF-3) complex.

It is found in the cytoplasm. Functionally, component of the eukaryotic translation initiation factor 3 (eIF-3) complex, which is involved in protein synthesis of a specialized repertoire of mRNAs and, together with other initiation factors, stimulates binding of mRNA and methionyl-tRNAi to the 40S ribosome. The eIF-3 complex specifically targets and initiates translation of a subset of mRNAs involved in cell proliferation. This is Eukaryotic translation initiation factor 3 subunit C from Meyerozyma guilliermondii (strain ATCC 6260 / CBS 566 / DSM 6381 / JCM 1539 / NBRC 10279 / NRRL Y-324) (Yeast).